Consider the following 134-residue polypeptide: ATP synthase epsilon chain (134 aa).

It belongs to the ATPase epsilon chain family. As to quaternary structure, F-type ATPases have 2 components, CF(1) - the catalytic core - and CF(0) - the membrane proton channel. CF(1) has five subunits: alpha(3), beta(3), gamma(1), delta(1), epsilon(1). CF(0) has three main subunits: a, b and c.

The protein localises to the cell membrane. Its function is as follows. Produces ATP from ADP in the presence of a proton gradient across the membrane. The sequence is that of ATP synthase epsilon chain from Staphylococcus aureus (strain USA300).